The following is a 154-amino-acid chain: Probable deoxyuridine 5'-triphosphate nucleotidohydrolase (154 aa).

This sequence belongs to the dCTP deaminase family. Archaeal dUTPase subfamily.

It catalyses the reaction dUTP + H2O = dUMP + diphosphate + H(+). It functions in the pathway pyrimidine metabolism; dUMP biosynthesis; dUMP from dCTP (dUTP route): step 2/2. Functionally, this enzyme is involved in nucleotide metabolism: it produces dUMP, the immediate precursor of thymidine nucleotides and it decreases the intracellular concentration of dUTP so that uracil cannot be incorporated into DNA. This Methanopyrus kandleri (strain AV19 / DSM 6324 / JCM 9639 / NBRC 100938) protein is Probable deoxyuridine 5'-triphosphate nucleotidohydrolase.